Reading from the N-terminus, the 155-residue chain is Ciliary microtubule inner protein 2C (155 aa).

It belongs to the CIMIP2 family.

The protein localises to the cytoplasm. It localises to the cytoskeleton. Its subcellular location is the cilium axoneme. Microtubule inner protein (MIP) part of the dynein-decorated doublet microtubules (DMTs) in cilia axoneme, which is required for motile cilia beating. The polypeptide is Ciliary microtubule inner protein 2C (cimip2ca) (Xenopus laevis (African clawed frog)).